Consider the following 359-residue polypeptide: Guanine nucleotide-binding protein G(o) subunit alpha (359 aa).

The disordered stretch occupies residues 1–26; sequence MGGCVSATPEEREAKTRSSVIDRQQR. Residue Gly2 is the site of N-myristoyl glycine attachment. A lipid anchor (S-palmitoyl cysteine) is attached at Cys4. The G-alpha domain maps to 34–359; sequence NTIKILLLGA…RENLEAANLL (326 aa). The G1 motif stretch occupies residues 37–50; the sequence is KILLLGAGESGKST. Residues 42 to 49, 178 to 184, 203 to 207, 272 to 275, and Ala331 contribute to the GTP site; these read GAGESGKS, LRSRVQT, DVGGQ, and NKAD. Residues Ser49 and Thr184 each coordinate Mg(2+). Residues 176-184 are G2 motif; that stretch reads DVLRSRVQT. Residues 199-208 are G3 motif; sequence YRVVDVGGQR. Positions 268 to 275 are G4 motif; sequence ILFLNKAD. Positions 329–334 are G5 motif; sequence TTATDT.

The protein belongs to the G-alpha family. G(i/o/t/z) subfamily. As to quaternary structure, g proteins are composed of 3 units; alpha, beta and gamma. The alpha chain contains the guanine nucleotide binding site.

In terms of biological role, guanine nucleotide-binding proteins (G proteins) are involved as modulators or transducers in various transmembrane signaling systems. The G(o) protein function is not clear. This is Guanine nucleotide-binding protein G(o) subunit alpha from Geodia cydonium (Sponge).